A 1092-amino-acid polypeptide reads, in one-letter code: Electroneutral sodium bicarbonate exchanger 1 (1092 aa).

3 disordered regions span residues 1-26, 55-95, and 243-263; these read MPAG…VDQG, LGRQ…HDTP, and KKQS…PQSA. At 1 to 478 the chain is on the extracellular side; sequence MPAGSNEPDG…DYRDALSLQC (478 aa). Residues 58 to 76 are compositionally biased toward basic residues; that stretch reads QSHRHHRTHGQKHRRRGGR. The span at 243–255 shows a compositional bias: basic and acidic residues; that stretch reads KKQSDPHSMDRDG. Residues 479–499 traverse the membrane as a helical segment; that stretch reads LASFLFLYCACMSPVITFGGL. Topologically, residues 500–507 are cytoplasmic; it reads LGEATEGR. The helical transmembrane segment at 508–528 threads the bilayer; that stretch reads ISAIESLFGASMTGIAYSLFA. At 529-565 the chain is on the extracellular side; it reads GQPLTILGSTGPVLVFEKILFKFCKDYALSYLSLRAC. A helical transmembrane segment spans residues 566–586; that stretch reads IGLWTAFLCIVLVATDASSLV. At 587–595 the chain is on the cytoplasmic side; sequence CYITRFTEE. Residues 596 to 616 traverse the membrane as a helical segment; sequence AFASLICIIFIYEAIEKLIHL. Topologically, residues 617–687 are extracellular; the sequence is AETYPIHMHS…EFIGSACGHH (71 aa). Cystine bridges form between C636–C684 and C638–C672. Residues N646 and N666 are each glycosylated (N-linked (GlcNAc) asparagine). Residues 688–708 traverse the membrane as a helical segment; the sequence is GPYTPDVLFWSCILFFATFIV. At 709–731 the chain is on the cytoplasmic side; it reads SSTLKTFKTSRYFPTRVRSTVSD. The helical transmembrane segment at 732–752 threads the bilayer; sequence FAVFLTIFTMVILDFLIGVPS. The Extracellular segment spans residues 753–778; the sequence is PKLQVPSVFKPTRDDRGWFISPIGPN. The helical transmembrane segment at 779 to 799 threads the bilayer; that stretch reads PWWTVIAAIIPALLCTILIFM. Residues 800 to 824 are Cytoplasmic-facing; it reads DQQITAVIINRKEHKLKKGCGYHLD. The chain crosses the membrane as a helical span at residues 825–845; that stretch reads LLVVAIMLGVCSLMGLPWFVA. The Extracellular portion of the chain corresponds to 846-881; sequence ATVLSITHVNSLKLESECSAPGEQPKFLGIREQRVT. The helical transmembrane segment at 882–902 threads the bilayer; sequence GLMIFVLMGCSVFMTAVLKFI. Residues 903–904 lie on the Cytoplasmic side of the membrane; the sequence is PM. A helical membrane pass occupies residues 905–925; it reads PVLYGVFLYMGVSSLQGIQFF. The Extracellular portion of the chain corresponds to 926–962; sequence DRLKLFGMPAKHQPDFIYLRHVPLRKVHLFTLVQLTC. A helical transmembrane segment spans residues 963 to 983; that stretch reads LVLLWVIKASPAAIVFPMMVL. Residues 984–1092 lie on the Cytoplasmic side of the membrane; it reads ALVFVRKVMD…GNTKEKSPFN (109 aa).

It belongs to the anion exchanger (TC 2.A.31) family. Homodimer. Expressed in the Purkinje cells and dendrites in the molecular layer of the cerebellum (at protein level). Expressed in the hippocampal neurons (at protein level). Strong expression observed in testis and moderate expression in kidney inner medulla, the submandibular gland, eye, cerebrum and cerebellum.

It is found in the cell membrane. It localises to the apical cell membrane. The protein localises to the basolateral cell membrane. Its subcellular location is the cytoplasmic vesicle. The protein resides in the secretory vesicle. It is found in the synaptic vesicle membrane. The catalysed reaction is 2 hydrogencarbonate(out) + chloride(in) + Na(+)(out) = 2 hydrogencarbonate(in) + chloride(out) + Na(+)(in). Functionally, mediates electroneutral sodium- and carbonate-dependent chloride-HCO3(-) exchange with a Na(+):HCO3(-) stoichiometry of 2:1. Plays a major role in pH regulation in neurons. Mediates sodium reabsorption in the renal cortical collecting ducts. The chain is Electroneutral sodium bicarbonate exchanger 1 from Rattus norvegicus (Rat).